The primary structure comprises 105 residues: Multidrug resistance protein EbrA (105 aa).

Helical transmembrane passes span 2 to 22 (LIGY…AAML), 35 to 55 (ALVV…LNHI), 57 to 77 (LSLS…VIGV), and 84 to 104 (LNAK…LLNW).

Belongs to the drug/metabolite transporter (DMT) superfamily. Small multidrug resistance (SMR) (TC 2.A.7.1) family. EbrA/EbrB subfamily. The efflux pump is composed of EbrA and EbrB.

Its subcellular location is the cell membrane. Its function is as follows. Part of a multidrug efflux pump. Confers resistance to cationic lipophilic dyes such as ethidium bromide, acriflavine, pyronine Y and safranin O. The efflux is probably coupled to an influx of protons. The chain is Multidrug resistance protein EbrA (ebrA) from Bacillus subtilis (strain 168).